The sequence spans 249 residues: 3-deoxy-D-manno-octulosonic acid kinase (249 aa).

Aspartate 175 is a catalytic residue.

Belongs to the protein kinase superfamily. KdkA/RfaP family.

It is found in the cell inner membrane. It catalyses the reaction an alpha-Kdo-(2-&gt;6)-lipid IVA + ATP = a 4-O-phospho-alpha-Kdo-(2-&gt;6)-lipid IVA + ADP + H(+). It functions in the pathway bacterial outer membrane biogenesis; LPS core biosynthesis. Functionally, catalyzes the ATP-dependent phosphorylation of the 3-deoxy-D-manno-octulosonic acid (Kdo) residue in Kdo-lipid IV(A) at the 4-OH position. This Xanthomonas euvesicatoria pv. vesicatoria (strain 85-10) (Xanthomonas campestris pv. vesicatoria) protein is 3-deoxy-D-manno-octulosonic acid kinase.